Here is a 123-residue protein sequence, read N- to C-terminus: Nitrogen regulatory protein GlnK2 (123 aa).

Residues 38 to 40 (SLT) and serine 49 contribute to the ATP site. Residue serine 49 participates in ADP binding. The residue at position 62 (tyrosine 62) is an O-UMP-tyrosine. ATP is bound by residues valine 75, 98–101 (GDGK), and arginine 114. 98–101 (GDGK) contacts ADP. 98 to 101 (GDGK) is an AMP binding site.

This sequence belongs to the P(II) protein family. Homotrimer. Interacts with the glutamine synthetase 3 (GS3) in the presence of 2-oxoglutarate. Interacts in vitro with Amt1 after ammonium shock. May also interact with Amt2. Post-translationally, uridylylated on Tyr-62.

It localises to the cytoplasm. Binds the effectors ADP and ATP. Also binds AMP with high affinity, raising the possibility that AMP could be an important PII effector, at least in archaea. The change in the ATP/AMP ratio may be more relevant for describing the energy status in the cells than the ATP/ADP ratio alone. Its function is as follows. Involved in the regulation of nitrogen metabolism. Regulates the activity of its targets by protein-protein interaction in response to the nitrogen status of the cell. Increases the activity of the glutamine synthetase 3 in the presence of 2-oxoglutarate. May regulate the activity of the ammonia channel Amt2 via direct interaction. The protein is Nitrogen regulatory protein GlnK2 of Haloferax mediterranei (strain ATCC 33500 / DSM 1411 / JCM 8866 / NBRC 14739 / NCIMB 2177 / R-4) (Halobacterium mediterranei).